Here is a 369-residue protein sequence, read N- to C-terminus: Coiled-coil domain-containing protein 149 (369 aa).

Residues 1–249 (MKENNNAEIL…AKYKQMAEAV (249 aa)) adopt a coiled-coil conformation.

The protein belongs to the CCDC149 family. In terms of tissue distribution, expressed in amphid and phasmid ciliated neurons, and also pharyngeal, touch receptor and motor neurons.

Its subcellular location is the cell projection. The protein localises to the cilium. In Caenorhabditis elegans, this protein is Coiled-coil domain-containing protein 149.